The chain runs to 384 residues: Chorismate synthase (384 aa).

Residues Arg-40 and Arg-46 each coordinate NADP(+). FMN contacts are provided by residues 127-129 (RTS), 247-248 (QA), Ala-292, 307-311 (KPIPT), and Arg-333.

It belongs to the chorismate synthase family. As to quaternary structure, homotetramer. Requires FMNH2 as cofactor.

It carries out the reaction 5-O-(1-carboxyvinyl)-3-phosphoshikimate = chorismate + phosphate. The protein operates within metabolic intermediate biosynthesis; chorismate biosynthesis; chorismate from D-erythrose 4-phosphate and phosphoenolpyruvate: step 7/7. Catalyzes the anti-1,4-elimination of the C-3 phosphate and the C-6 proR hydrogen from 5-enolpyruvylshikimate-3-phosphate (EPSP) to yield chorismate, which is the branch point compound that serves as the starting substrate for the three terminal pathways of aromatic amino acid biosynthesis. This reaction introduces a second double bond into the aromatic ring system. The protein is Chorismate synthase of Alkaliphilus oremlandii (strain OhILAs) (Clostridium oremlandii (strain OhILAs)).